The following is a 314-amino-acid chain: tRNA dimethylallyltransferase (314 aa).

Residue 9-16 coordinates ATP; that stretch reads GPTAVGKT. 11–16 contributes to the substrate binding site; that stretch reads TAVGKT. Positions 34–37 are interaction with substrate tRNA; that stretch reads DSMQ.

Belongs to the IPP transferase family. Monomer. Requires Mg(2+) as cofactor.

The enzyme catalyses adenosine(37) in tRNA + dimethylallyl diphosphate = N(6)-dimethylallyladenosine(37) in tRNA + diphosphate. Functionally, catalyzes the transfer of a dimethylallyl group onto the adenine at position 37 in tRNAs that read codons beginning with uridine, leading to the formation of N6-(dimethylallyl)adenosine (i(6)A). The polypeptide is tRNA dimethylallyltransferase (Clostridium tetani (strain Massachusetts / E88)).